The primary structure comprises 91 residues: Putative ribonuclease inhibitor YrdF (91 aa).

The protein belongs to the barstar family.

The protein localises to the cytoplasm. In Bacillus subtilis (strain 168), this protein is Putative ribonuclease inhibitor YrdF (yrdF).